A 154-amino-acid chain; its full sequence is Large ribosomal subunit protein uL13 (154 aa).

The tract at residues 132–154 is disordered; the sequence is PHEAQQPETLDVGAMNRKNKRAA.

Belongs to the universal ribosomal protein uL13 family. Part of the 50S ribosomal subunit.

Its function is as follows. This protein is one of the early assembly proteins of the 50S ribosomal subunit, although it is not seen to bind rRNA by itself. It is important during the early stages of 50S assembly. The chain is Large ribosomal subunit protein uL13 from Rhodopseudomonas palustris (strain HaA2).